Reading from the N-terminus, the 1160-residue chain is Pesticidal crystal protein Cry8Ca (1160 aa).

This sequence belongs to the delta endotoxin family.

Its function is as follows. Promotes colloidosmotic lysis by binding to the midgut epithelial cells of insects. Active on various scarabaeid beetles such as Anomala cuprea, A.rufocuprea and Popillia japonica. This is Pesticidal crystal protein Cry8Ca (cry8Ca) from Bacillus thuringiensis subsp. japonensis.